The sequence spans 512 residues: Tyrosine decarboxylase (512 aa).

3 residues coordinate L-tyrosine: Pro-100, His-205, and His-320. N6-(pyridoxal phosphate)lysine is present on Lys-321. Residue Tyr-350 participates in L-tyrosine binding.

It belongs to the group II decarboxylase family. In terms of assembly, homodimer. Pyridoxal 5'-phosphate is required as a cofactor. In terms of tissue distribution, mainly expressed in roots, stems and capsule walls.

It catalyses the reaction L-tyrosine + H(+) = tyramine + CO2. In terms of biological role, tyrosine decarboxylase that converts tyrosine into tyramine, a precursor of isoquinoline alkaloids and various amides. This Papaver somniferum (Opium poppy) protein is Tyrosine decarboxylase.